The sequence spans 319 residues: Methionyl-tRNA formyltransferase (319 aa).

Residue 113 to 116 (SLLP) participates in (6S)-5,6,7,8-tetrahydrofolate binding.

Belongs to the Fmt family.

It carries out the reaction L-methionyl-tRNA(fMet) + (6R)-10-formyltetrahydrofolate = N-formyl-L-methionyl-tRNA(fMet) + (6S)-5,6,7,8-tetrahydrofolate + H(+). Functionally, attaches a formyl group to the free amino group of methionyl-tRNA(fMet). The formyl group appears to play a dual role in the initiator identity of N-formylmethionyl-tRNA by promoting its recognition by IF2 and preventing the misappropriation of this tRNA by the elongation apparatus. The protein is Methionyl-tRNA formyltransferase of Pseudomonas fluorescens (strain ATCC BAA-477 / NRRL B-23932 / Pf-5).